We begin with the raw amino-acid sequence, 581 residues long: Putative phospholipase B-like 3 (581 aa).

The N-terminal stretch at 1–16 (MKLLFFLFGLIFAVEQ) is a signal peptide. N-linked (GlcNAc...) asparagine glycans are attached at residues N50, N82, N132, N169, N215, N309, N543, N546, and N560.

It belongs to the phospholipase B-like family.

The protein resides in the secreted. Its function is as follows. Putative phospholipase. The sequence is that of Putative phospholipase B-like 3 from Caenorhabditis elegans.